A 375-amino-acid polypeptide reads, in one-letter code: UDP-N-acetylglucosamine--N-acetylmuramyl-(pentapeptide) pyrophosphoryl-undecaprenol N-acetylglucosamine transferase (375 aa).

UDP-N-acetyl-alpha-D-glucosamine contacts are provided by residues 13–15, asparagine 124, arginine 165, serine 193, and glutamine 294; that span reads TGG.

It belongs to the glycosyltransferase 28 family. MurG subfamily.

The protein resides in the cell inner membrane. The catalysed reaction is di-trans,octa-cis-undecaprenyl diphospho-N-acetyl-alpha-D-muramoyl-L-alanyl-D-glutamyl-meso-2,6-diaminopimeloyl-D-alanyl-D-alanine + UDP-N-acetyl-alpha-D-glucosamine = di-trans,octa-cis-undecaprenyl diphospho-[N-acetyl-alpha-D-glucosaminyl-(1-&gt;4)]-N-acetyl-alpha-D-muramoyl-L-alanyl-D-glutamyl-meso-2,6-diaminopimeloyl-D-alanyl-D-alanine + UDP + H(+). The protein operates within cell wall biogenesis; peptidoglycan biosynthesis. Functionally, cell wall formation. Catalyzes the transfer of a GlcNAc subunit on undecaprenyl-pyrophosphoryl-MurNAc-pentapeptide (lipid intermediate I) to form undecaprenyl-pyrophosphoryl-MurNAc-(pentapeptide)GlcNAc (lipid intermediate II). In Brucella anthropi (strain ATCC 49188 / DSM 6882 / CCUG 24695 / JCM 21032 / LMG 3331 / NBRC 15819 / NCTC 12168 / Alc 37) (Ochrobactrum anthropi), this protein is UDP-N-acetylglucosamine--N-acetylmuramyl-(pentapeptide) pyrophosphoryl-undecaprenol N-acetylglucosamine transferase.